Here is a 735-residue protein sequence, read N- to C-terminus: Peroxisomal multifunctional enzyme type 2 (735 aa).

A (3R)-hydroxyacyl-CoA dehydrogenase region spans residues 1–305 (MASPLRFDGR…IEVLHKIDSE (305 aa)). NAD(+)-binding positions include 16–40 (GAGG…VVND), L21, and D40. K46 is modified (N6-acetyllysine; alternate). At K46 the chain carries N6-succinyllysine; alternate. A Phosphoserine modification is found at S52. K57 and K68 each carry N6-succinyllysine. 75–76 (SV) contacts NAD(+). At K84 the chain carries N6-succinyllysine. N99 provides a ligand contact to NAD(+). Substrate is bound at residue S151. Catalysis depends on Y164, which acts as the Proton acceptor. NAD(+)-binding positions include 164–168 (YSAAK) and 196–199 (AGSR). Phosphothreonine is present on T265. An N6-succinyllysine modification is found at K275. Residues S304 and S308 each carry the phosphoserine modification. The segment at 321–621 (SGFAGVVGHK…AQTPSEGGAL (301 aa)) is enoyl-CoA hydratase 2. Residue K355 is modified to N6-succinyllysine. (3R)-3-hydroxydecanoyl-CoA is bound at residue 405 to 406 (HG). K423 carries the N6-succinyllysine modification. (3R)-3-hydroxydecanoyl-CoA-binding positions include K434, 509–514 (DSNPLH), G532, and F562. The MaoC-like domain maps to 483 to 599 (VPSRPPDAVL…QETGDIVISN (117 aa)). K564 is subject to N6-acetyllysine. An N6-succinyllysine mark is found at K578 and K662. The SCP2 domain maps to 623-735 (SALVFGEIGR…QMILKDYAKL (113 aa)). Residue K668 is modified to N6-acetyllysine. Substrate-binding residues include Q705 and Q723. K724 carries the N6-succinyllysine modification. Positions 733 to 735 (AKL) match the Microbody targeting signal motif.

It belongs to the short-chain dehydrogenases/reductases (SDR) family. As to quaternary structure, homodimer.

The protein resides in the peroxisome. The catalysed reaction is a (3R)-3-hydroxyacyl-CoA + NAD(+) = a 3-oxoacyl-CoA + NADH + H(+). It carries out the reaction (24R,25R)-3alpha,7alpha,12alpha,24-tetrahydroxy-5beta-cholestan-26-oyl-CoA = (24E)-3alpha,7alpha,12alpha-trihydroxy-5beta-cholest-24-en-26-oyl-CoA + H2O. It catalyses the reaction a (3R)-3-hydroxyacyl-CoA = a (2E)-enoyl-CoA + H2O. The enzyme catalyses (2E)-octenoyl-CoA + H2O = (3R)-hydroxyoctanoyl-CoA. The catalysed reaction is (3R)-hydroxyoctanoyl-CoA + NAD(+) = 3-oxooctanoyl-CoA + NADH + H(+). It carries out the reaction (3R)-hydroxyhexadecanoyl-CoA + NAD(+) = 3-oxohexadecanoyl-CoA + NADH + H(+). It catalyses the reaction (2E)-hexadecenedioyl-CoA + H2O = (3R)-hydroxyhexadecanedioyl-CoA. The enzyme catalyses (3R)-hydroxyhexadecanedioyl-CoA + NAD(+) = 3-oxohexadecanedioyl-CoA + NADH + H(+). The catalysed reaction is (3R)-hydroxyhexadecanoyl-CoA = (2E)-hexadecenoyl-CoA + H2O. It carries out the reaction (3R)-3-hydroxydecanoyl-CoA = (2E)-decenoyl-CoA + H2O. It catalyses the reaction (3R)-3-hydroxydecanoyl-CoA + NAD(+) = 3-oxodecanoyl-CoA + NADH + H(+). The enzyme catalyses (24R,25R)-3alpha,7alpha,12alpha,24-tetrahydroxy-5beta-cholestan-26-oyl-CoA + NAD(+) = 3alpha,7alpha,12alpha-trihydroxy-24-oxo-5beta-cholestan-26-oyl-CoA + NADH + H(+). The protein operates within lipid metabolism; fatty acid beta-oxidation. In terms of biological role, bifunctional enzyme acting on the peroxisomal fatty acid beta-oxidation pathway. Catalyzes two of the four reactions in fatty acid degradation: hydration of 2-enoyl-CoA (trans-2-enoyl-CoA) to produce (3R)-3-hydroxyacyl-CoA, and dehydrogenation of (3R)-3-hydroxyacyl-CoA to produce 3-ketoacyl-CoA (3-oxoacyl-CoA), which is further metabolized by SCPx. Can use straight-chain and branched-chain fatty acids, as well as bile acid intermediates as substrates. This chain is Peroxisomal multifunctional enzyme type 2, found in Rattus norvegicus (Rat).